A 379-amino-acid chain; its full sequence is Homoserine O-succinyltransferase (379 aa).

An AB hydrolase-1 domain is found at 51–360 (NAVLICHALS…DSPYGHDAFL (310 aa)). Catalysis depends on S157, which acts as the Nucleophile. A substrate-binding site is contributed by R227. Residues D323 and H356 contribute to the active site. A substrate-binding site is contributed by D357.

It belongs to the AB hydrolase superfamily. MetX family. In terms of assembly, homodimer.

The protein resides in the cytoplasm. It carries out the reaction L-homoserine + succinyl-CoA = O-succinyl-L-homoserine + CoA. It functions in the pathway amino-acid biosynthesis; L-methionine biosynthesis via de novo pathway; O-succinyl-L-homoserine from L-homoserine: step 1/1. Transfers a succinyl group from succinyl-CoA to L-homoserine, forming succinyl-L-homoserine. The sequence is that of Homoserine O-succinyltransferase from Pseudomonas entomophila (strain L48).